We begin with the raw amino-acid sequence, 63 residues long: Hyphancin-3D (63 aa).

An N-terminal signal peptide occupies residues 1 to 22 (MNFSRIIFLVFACFVALASVSA). The propeptide at 23–26 (APEP) is removed by a dipeptidylpeptidase. Leu61 is subject to Leucine amide.

Belongs to the cecropin family.

Its subcellular location is the secreted. In terms of biological role, has antibacterial activity. This is Hyphancin-3D from Hyphantria cunea (Fall webworm moth).